Here is a 210-residue protein sequence, read N- to C-terminus: Leucyl/phenylalanyl-tRNA--protein transferase (210 aa).

This sequence belongs to the L/F-transferase family.

It localises to the cytoplasm. It catalyses the reaction N-terminal L-lysyl-[protein] + L-leucyl-tRNA(Leu) = N-terminal L-leucyl-L-lysyl-[protein] + tRNA(Leu) + H(+). The enzyme catalyses N-terminal L-arginyl-[protein] + L-leucyl-tRNA(Leu) = N-terminal L-leucyl-L-arginyl-[protein] + tRNA(Leu) + H(+). The catalysed reaction is L-phenylalanyl-tRNA(Phe) + an N-terminal L-alpha-aminoacyl-[protein] = an N-terminal L-phenylalanyl-L-alpha-aminoacyl-[protein] + tRNA(Phe). Functions in the N-end rule pathway of protein degradation where it conjugates Leu, Phe and, less efficiently, Met from aminoacyl-tRNAs to the N-termini of proteins containing an N-terminal arginine or lysine. The sequence is that of Leucyl/phenylalanyl-tRNA--protein transferase from Roseobacter denitrificans (strain ATCC 33942 / OCh 114) (Erythrobacter sp. (strain OCh 114)).